The following is a 192-amino-acid chain: Nucleoside triphosphate pyrophosphatase (192 aa).

Asp-73 acts as the Proton acceptor in catalysis.

Belongs to the Maf family. It depends on a divalent metal cation as a cofactor.

The protein resides in the cytoplasm. The catalysed reaction is a ribonucleoside 5'-triphosphate + H2O = a ribonucleoside 5'-phosphate + diphosphate + H(+). It catalyses the reaction a 2'-deoxyribonucleoside 5'-triphosphate + H2O = a 2'-deoxyribonucleoside 5'-phosphate + diphosphate + H(+). In terms of biological role, nucleoside triphosphate pyrophosphatase. May have a dual role in cell division arrest and in preventing the incorporation of modified nucleotides into cellular nucleic acids. The protein is Nucleoside triphosphate pyrophosphatase of Ehrlichia ruminantium (strain Gardel).